The primary structure comprises 218 residues: Outer-membrane lipoprotein LolB (218 aa).

Positions 1-20 are cleaved as a signal peptide; sequence MSQVIRTLALTGLALAGLSG. Residue C21 is the site of N-palmitoyl cysteine attachment. C21 carries S-diacylglycerol cysteine lipidation.

It belongs to the LolB family. As to quaternary structure, monomer.

It is found in the cell outer membrane. In terms of biological role, plays a critical role in the incorporation of lipoproteins in the outer membrane after they are released by the LolA protein. The polypeptide is Outer-membrane lipoprotein LolB (Xanthomonas campestris pv. campestris (strain B100)).